The primary structure comprises 617 residues: Probable Xaa-Pro aminopeptidase P (617 aa).

Positions 414, 425, 523, and 537 each coordinate Mn(2+).

The protein belongs to the peptidase M24B family. Requires Mn(2+) as cofactor.

The catalysed reaction is Release of any N-terminal amino acid, including proline, that is linked to proline, even from a dipeptide or tripeptide.. In terms of biological role, catalyzes the removal of a penultimate prolyl residue from the N-termini of peptides. In Colletotrichum graminicola (strain M1.001 / M2 / FGSC 10212) (Maize anthracnose fungus), this protein is Probable Xaa-Pro aminopeptidase P (AMPP).